A 235-amino-acid chain; its full sequence is Probable inactive serine protease 37 (235 aa).

The first 19 residues, 1-19 (MKFIFYLSVLTGTFLFADS), serve as a signal peptide directing secretion. Residues 20–233 (SVQKEDPAPY…YVSWIENTAK (214 aa)) form the Peptidase S1 domain. Cystine bridges form between Cys40-Cys56, Cys131-Cys198, and Cys163-Cys177.

This sequence belongs to the peptidase S1 family.

It localises to the cytoplasmic vesicle. The protein localises to the secretory vesicle. The protein resides in the acrosome. Its subcellular location is the secreted. In terms of biological role, plays a role in male fertility. May have a role in sperm migration or binding to zona-intact eggs. Involved in the activation of the proacrosin/acrosin system. In Macaca fascicularis (Crab-eating macaque), this protein is Probable inactive serine protease 37.